We begin with the raw amino-acid sequence, 841 residues long: MNIQGKGFPLDLGRSFTEDAPRPPVPGEEGELVSTDPRPVSHGFYSSKSDAVRNETSTATPRRSDLDLGYEPEGSASPTPPYLKWAESLHSLLDDQDGINLFRTFLKQEDCADLLDFWFACSGFRKLEPCVSNEEKRLKLAKAIYKKYILDNNGIVSRQIKPATKSFIKDCVMKLQIDPDMFDQAQTEIQCMIEDNTYPLFLKSDIYLEYTRTGGESPKIYSDPSSGSGTGKGLPGYLPTLNEDEEWKCDQDTEPEASRDSAPSSRLTQKLLLETATQRATSTRRYSEGREFRHGSWREPVNPYYVNTGYAMAPATSANDSEQQSMSSDADTMSLTDSSIDGIPPYRLRKQHRREMQESAKANGRVPLPHIPRTYRMPKDIHVEPEKFAAELINRLEEVQKEREAEEKLEERLKRVRAEEEGEDADISSGPSVISHKMPSAQPFHHFAPRYSEMGCAGMQMRDAHEENPESILDEHVQRVMKTPGCQSPGPGRHSPKPRSPESGHLGKLSGTLGTIPPGHGKHTTKSGMKLDAANLYHHKHVYHHIHHHSMMKPKEQIEAEATQRVQNSFAWNVDSHNYATKSRNYSENLGMAPVPMDSLGYSGKASLLSKRNIKKTDSGKSDGANYEMPGSPEDVERNQKILQWIIEGEKEISRHKKTNHGSSGVKKQLSHDMVRPLSIERPVAVHPWVSAQLRNVVQPSHPFIQDPTMPPNPAPNPLTQLEEARRRLEEEEKRAGKLPLKQRLKPQKRPGSGASQPCENIVVAYYFCGEPIPYRTLVKGRVVTLGQFKELLTKKGNYRYYFKKVSDEFDCGVVFEEVREDDTILPIFEEKIIGKVEKID.

Positions Met-1 to Pro-78 are disordered. A compositionally biased stretch (polar residues) spans Phe-44–Pro-61. An RGS domain is found at Ser-88 to Thr-211. The segment at Ser-217–Gln-269 is disordered. Positions Lys-248 to Arg-259 are enriched in basic and acidic residues. Residues Leu-348–Val-433 form an interaction with GSK3B region. The interaction with beta-catenin stretch occupies residues Ile-434–Lys-508. Disordered regions lie at residues Lys-482–Ser-527, Asn-613–Asp-635, and Arg-727–Ser-756. Basic and acidic residues predominate over residues Arg-727–Ala-736. Residues Cys-759–Asp-841 form the DIX domain.

As to quaternary structure, homodimer. In terms of processing, ADP-ribosylated by tankyrase TNKS and TNKS2. Poly-ADP-ribosylated protein is recognized by RNF146, followed by ubiquitination at 'Lys-48' and subsequent activation of the Wnt signaling pathway. Ubiquitinated by RNF146 when poly-ADP-ribosylated, leading to its degradation and subsequent activation of the Wnt signaling pathway.

Its subcellular location is the cytoplasm. The protein localises to the nucleus. It localises to the membrane. The protein resides in the cell membrane. Component of the beta-catenin destruction complex required for regulating CTNNB1 levels through phosphorylation and ubiquitination, and modulating Wnt-signaling. Controls dorsoventral patterning via two opposing effects; down-regulates CTNNB1 to inhibit the Wnt signaling pathway and ventralize embryos, but also dorsalizes embryos by activating a Wnt-independent JNK signaling pathway. The protein is Axin-1 (AXIN1) of Gallus gallus (Chicken).